The sequence spans 545 residues: Cryptochrome-1 (545 aa).

In terms of domain architecture, Photolyase/cryptochrome alpha/beta spans 3 to 138 (VNNILWFRHG…KCVEKVSHTL (136 aa)). FAD-binding positions include Arg-236, Ser-264, Ser-266, Gln-307, His-374, 406 to 408 (DAD), Cys-412, and Asn-415.

The protein belongs to the DNA photolyase class-1 family. Interacts with tim and per; promoted by light conditions. FAD is required as a cofactor.

It is found in the cytoplasm. Its subcellular location is the perinuclear region. It localises to the nucleus. In terms of biological role, blue light-dependent regulator that is the input of the circadian feedback loop. Has no photolyase activity for cyclobutane pyrimidine dimers or 6-4 photoproducts. Regulation of expression by light suggests a role in photoreception for locomotor activity rhythms. Functions, together with per, as a transcriptional repressor required for the oscillation of peripheral circadian clocks and for the correct specification of clock cells. Genes directly activated by the transcription factors Clock (Clk) and cycle (cyc) are repressed by cry. This chain is Cryptochrome-1, found in Aedes aegypti (Yellowfever mosquito).